A 194-amino-acid chain; its full sequence is Glycerol-3-phosphate acyltransferase 2 (194 aa).

Helical transmembrane passes span 1–21, 64–84, 112–132, 135–155, and 156–173; these read MWLL…AYVV, VLAV…LAAL, LAMA…VVIF, YISL…IYFH, and RPWP…LVIY.

Belongs to the PlsY family. Probably interacts with PlsX.

It localises to the cell membrane. The enzyme catalyses an acyl phosphate + sn-glycerol 3-phosphate = a 1-acyl-sn-glycero-3-phosphate + phosphate. Its pathway is lipid metabolism; phospholipid metabolism. Catalyzes the transfer of an acyl group from acyl-phosphate (acyl-PO(4)) to glycerol-3-phosphate (G3P) to form lysophosphatidic acid (LPA). This enzyme utilizes acyl-phosphate as fatty acyl donor, but not acyl-CoA or acyl-ACP. This chain is Glycerol-3-phosphate acyltransferase 2, found in Moorella thermoacetica (strain ATCC 39073 / JCM 9320).